A 419-amino-acid chain; its full sequence is Tyrosine--tRNA ligase (419 aa).

Tyr34 lines the L-tyrosine pocket. The 'HIGH' region signature appears at 39–48; that stretch reads PTADSLHIGN. Residues Tyr169 and Gln173 each coordinate L-tyrosine. The short motif at 230 to 234 is the 'KMSKS' region element; it reads KFGKT. Lys233 serves as a coordination point for ATP. Positions 352–419 constitute an S4 RNA-binding domain; the sequence is VPLVELLVSA…KKKYYLIRYA (68 aa).

The protein belongs to the class-I aminoacyl-tRNA synthetase family. TyrS type 1 subfamily. As to quaternary structure, homodimer.

It is found in the cytoplasm. The enzyme catalyses tRNA(Tyr) + L-tyrosine + ATP = L-tyrosyl-tRNA(Tyr) + AMP + diphosphate + H(+). Catalyzes the attachment of tyrosine to tRNA(Tyr) in a two-step reaction: tyrosine is first activated by ATP to form Tyr-AMP and then transferred to the acceptor end of tRNA(Tyr). The sequence is that of Tyrosine--tRNA ligase from Geobacillus kaustophilus (strain HTA426).